Consider the following 72-residue polypeptide: SRY-related protein MG43 (72 aa).

A DNA-binding region (HMG box) is located at residues 1–69 (VKRPMNAFMV…KHMADYPDYK (69 aa)).

It is found in the nucleus. In Tarentola mauritanica (Common wall gecko), this protein is SRY-related protein MG43.